The sequence spans 261 residues: Cytochrome c oxidase subunit 3 (261 aa).

At 1–15 the chain is on the mitochondrial matrix side; sequence MTHQTHAYHMVNPSP. Residues 16–34 form a helical membrane-spanning segment; it reads WPLTGALSALLMTSGLTMW. The Mitochondrial intermembrane segment spans residues 35–40; it reads FHFNSM. A helical transmembrane segment spans residues 41–66; the sequence is TLLTLGLTTNMLTMYQWWRDIIREST. Residues 67–72 lie on the Mitochondrial matrix side of the membrane; sequence FQGHHT. A helical membrane pass occupies residues 73–105; it reads PNVQKGLRYGMILFIISEVLFFTGFFWAFYHSS. Over 106–128 the chain is Mitochondrial intermembrane; the sequence is LAPTPELGGCWPPTGIHPLNPLE. A helical membrane pass occupies residues 129-152; that stretch reads VPLLNTSVLLASGVSITWAHHSLM. Topologically, residues 153-155 are mitochondrial matrix; the sequence is EGN. The chain crosses the membrane as a helical span at residues 156 to 183; it reads RNHMLQALFITISLGVYFTLLQASEYYE. Topologically, residues 184–190 are mitochondrial intermembrane; sequence APFTISD. A helical membrane pass occupies residues 191-223; it reads GVYGSTFFVATGFHGLHVIIGSTFLIVCFFRQL. At 224–232 the chain is on the mitochondrial matrix side; it reads KFHFTSNHH. A helical transmembrane segment spans residues 233-256; it reads FGFEAAAWYWHFVDVVWLFLYVSI. Over 257-261 the chain is Mitochondrial intermembrane; sequence YWWGS.

Belongs to the cytochrome c oxidase subunit 3 family. Component of the cytochrome c oxidase (complex IV, CIV), a multisubunit enzyme composed of 14 subunits. The complex is composed of a catalytic core of 3 subunits MT-CO1, MT-CO2 and MT-CO3, encoded in the mitochondrial DNA, and 11 supernumerary subunits COX4I, COX5A, COX5B, COX6A, COX6B, COX6C, COX7A, COX7B, COX7C, COX8 and NDUFA4, which are encoded in the nuclear genome. The complex exists as a monomer or a dimer and forms supercomplexes (SCs) in the inner mitochondrial membrane with NADH-ubiquinone oxidoreductase (complex I, CI) and ubiquinol-cytochrome c oxidoreductase (cytochrome b-c1 complex, complex III, CIII), resulting in different assemblies (supercomplex SCI(1)III(2)IV(1) and megacomplex MCI(2)III(2)IV(2)).

The protein resides in the mitochondrion inner membrane. The catalysed reaction is 4 Fe(II)-[cytochrome c] + O2 + 8 H(+)(in) = 4 Fe(III)-[cytochrome c] + 2 H2O + 4 H(+)(out). In terms of biological role, component of the cytochrome c oxidase, the last enzyme in the mitochondrial electron transport chain which drives oxidative phosphorylation. The respiratory chain contains 3 multisubunit complexes succinate dehydrogenase (complex II, CII), ubiquinol-cytochrome c oxidoreductase (cytochrome b-c1 complex, complex III, CIII) and cytochrome c oxidase (complex IV, CIV), that cooperate to transfer electrons derived from NADH and succinate to molecular oxygen, creating an electrochemical gradient over the inner membrane that drives transmembrane transport and the ATP synthase. Cytochrome c oxidase is the component of the respiratory chain that catalyzes the reduction of oxygen to water. Electrons originating from reduced cytochrome c in the intermembrane space (IMS) are transferred via the dinuclear copper A center (CU(A)) of subunit 2 and heme A of subunit 1 to the active site in subunit 1, a binuclear center (BNC) formed by heme A3 and copper B (CU(B)). The BNC reduces molecular oxygen to 2 water molecules using 4 electrons from cytochrome c in the IMS and 4 protons from the mitochondrial matrix. The chain is Cytochrome c oxidase subunit 3 (MT-CO3) from Antidorcas marsupialis (Springbok).